A 253-amino-acid chain; its full sequence is Tryptophan synthase alpha chain (253 aa).

Residues Glu46 and Asp57 each act as proton acceptor in the active site.

It belongs to the TrpA family. In terms of assembly, tetramer of two alpha and two beta chains.

The catalysed reaction is (1S,2R)-1-C-(indol-3-yl)glycerol 3-phosphate + L-serine = D-glyceraldehyde 3-phosphate + L-tryptophan + H2O. It functions in the pathway amino-acid biosynthesis; L-tryptophan biosynthesis; L-tryptophan from chorismate: step 5/5. Its function is as follows. The alpha subunit is responsible for the aldol cleavage of indoleglycerol phosphate to indole and glyceraldehyde 3-phosphate. This is Tryptophan synthase alpha chain from Dictyoglomus thermophilum (strain ATCC 35947 / DSM 3960 / H-6-12).